An 858-amino-acid chain; its full sequence is Heat shock protein 105 kDa (858 aa).

Serine 2 carries the N-acetylserine modification. Position 471 is an N6-acetyllysine (lysine 471). Disordered stretches follow at residues lysine 500–alanine 584 and cysteine 796–aspartate 858. Residues glutamate 504–methionine 514 are compositionally biased toward acidic residues. Serine 509 and serine 510 each carry phosphoserine. Residues glutamine 532–serine 554 show a composition bias toward polar residues. Serine 557 carries the phosphoserine modification. Threonine 561 carries the post-translational modification Phosphothreonine. 2 stretches are compositionally biased toward basic and acidic residues: residues glutamate 563–alanine 584 and proline 805–arginine 814. Phosphoserine is present on serine 809. Threonine 815 is modified (phosphothreonine). The segment covering isoleucine 821–asparagine 832 has biased composition (basic and acidic residues). Polar residues predominate over residues glutamate 849 to aspartate 858.

The protein belongs to the heat shock protein 70 family. Interacts with HSPA8/HSC70. Interacts with HSPA1A (via NBD) and HSPA1B (via NBD). In terms of processing, phosphorylation on Ser-509 may be important for regulation of the HSPA8/HSC70 chaperone activity. Highly expressed in testis. Present at lower levels in most brain regions, except cerebellum. Overexpressed in cancer cells.

Its subcellular location is the cytoplasm. Acts as a nucleotide-exchange factor (NEF) for chaperone proteins HSPA1A and HSPA1B, promoting the release of ADP from HSPA1A/B thereby triggering client/substrate protein release. Prevents the aggregation of denatured proteins in cells under severe stress, on which the ATP levels decrease markedly. Inhibits HSPA8/HSC70 ATPase and chaperone activities. In Homo sapiens (Human), this protein is Heat shock protein 105 kDa (HSPH1).